A 1193-amino-acid chain; its full sequence is MVYFGDRQRDRNRDRSNQKVERIIHDEEFGEENVELVDSEWADFEKFICQLRKRRNSAMSMEEELRHVQRHPKIKSHAFYPCPPPAENARDSDSSDDDDPIGYIDTLMYGRYTKDLGEFAKDEARKLKILEKRRKQEDKQRNKELLGKHSTRAKRVSSWIWRHTVARLGEDWVFLALLGIIMALLSFIMDKGISICTNARIWLYRDLTSQPFVQYIAWVSLPVCLILFSAGFVHLIAPQSIGSGIPEMKTILRGVQLKEYLTFKTLVAKVIGLTATLGSGMPLGKEGPFVHIASIVAQLLSKLVTSFQGIYENESRNSEMLAAACAVGVGACFAAPVGGVLFSIEVTTTYFAVRNYWRGFFAAVCGATVFRLLAVWFQNADTVRALFLTNFTTEFPFDPQELFVFALIGLVCGLGGASYVWVHRRYVLFMRSNKRMNKFLQKNRFLYPGFLALLVSSISFPLGTGQFLAGELSTHEQVTQLFSNFTWSRDDLTVEQAAVVTHWMTSYTSVFGNLVIYTLFTFVVSIIASTIPVPSGMFIPVFKIGAGFGRLVGEFMAVTFPHGVRYGGRLSPIMPGGYAVVGAAAFSGSVTHTVSVAVIIFEMTGQITHVVPVMIAVLVANAVAALLQPSIYDSIILIKKLPYLPDLLPSSSGMYSIFVEDFMVRDVKYIWHGISYQKLKEVLKLNKTLRSLPLVDSPDNMILLGSVQRYELIKMIEKHIGREKRMEVAQKWQKEAQERALEEEKKKQEVELKMRRPSRFEVLPAPDILSLRQIANDEMLPPKKRAETMHGSLAPRKSILKKTNSFNLKTYAQPMGHSPSITPYTTITGNSEFRIRSAFEAIFKKSTTLQDVQPDPETGSLSPAASNHEVEVPRTPSTPGVSKKVQLPAQSNWDFVTDQIMLQVNPISTESNKMPAEKDFTDKALSNNGDSSKQSPSIKFKANKVADVNRSPQTAKRCSKIRFANEVGVNGSPTRTKCKIKPENVLGYSIEDVDETTNPESLAESIQKPKSVRLPRERVIDMSPEDQKQWELEEMLKPIDLQKANVHIDPSPFQLVERTSILKVHSLFSMVGINHAYVTKIGRLVGVVGLKELRKAIEDINSNSFVPPTRDEDADEKPAVEKPLLSTNSSDKAVDMTVTSMDSALSNSENCSDIEMEHIKHTDKGTVSLTMPPQESKQSPSADKSNTENGNHA.

Residues 1–168 are Cytoplasmic-facing; sequence MVYFGDRQRD…WIWRHTVARL (168 aa). Residues 76–97 are disordered; it reads SHAFYPCPPPAENARDSDSSDD. 2 consecutive transmembrane segments (helical) span residues 169–204 and 213–236; these read GEDWVFLALLGIIMALLSFIMDKGISICTNARIWLY and VQYIAWVSLPVCLILFSAGFVHLI. Positions 242–246 match the Selectivity filter part_1 motif; it reads GSGIP. Serine 243 lines the chloride pocket. The segment at residues 245 to 252 is an intramembrane region (helical); the sequence is IPEMKTIL. The next 2 helical transmembrane spans lie at 261–279 and 286–304; these read LTFKTLVAKVIGLTATLGS and EGPFVHIASIVAQLLSKLV. Residues 284-288 carry the Selectivity filter part_2 motif; the sequence is GKEGP. Intramembrane regions (helical) lie at residues 320-332 and 336-344; these read MLAAACAVGVGAC and PVGGVLFSI. 5 helical membrane passes run 356–373, 402–430, 439–458, 511–530, and 536–555; these read YWRGFFAAVCGATVFRLL, LFVFALIGLVCGLGGASYVWVHRRYVLFM, FLQKNRFLYPGFLALLVSSI, FGNLVIYTLFTFVVSIIAST, and GMFIPVFKIGAGFGRLVGEF. The Selectivity filter part_3 motif lies at 536–540; that stretch reads GMFIP. Phenylalanine 538 is a chloride binding site. An intramembrane region (helical) is located at residues 576 to 590; the sequence is GGYAVVGAAAFSGSV. Positions 591–592 form an intramembrane region, note=Loop between two helices; the sequence is TH. The helical intramembrane region spans 593–604; sequence TVSVAVIIFEMT. The segment at residues 605-609 is an intramembrane region (note=Loop between two helices); the sequence is GQITH. A helical membrane pass occupies residues 610–626; that stretch reads VVPVMIAVLVANAVAAL. Residues 627–1193 are Cytoplasmic-facing; the sequence is LQPSIYDSII…KSNTENGNHA (567 aa). Tyrosine 632 serves as a coordination point for chloride. Residues 663 to 723 enclose the CBS 1 domain; the sequence is MVRDVKYIWH…KMIEKHIGRE (61 aa). Disordered regions lie at residues 848–884, 1103–1122, and 1159–1193; these read TLQDVQPDPETGSLSPAASNHEVEVPRTPSTPGVSKK, NSFVPPTRDEDADEKPAVEK, and IKHTDKGTVSLTMPPQESKQSPSADKSNTENGNHA. One can recognise a CBS 2 domain in the interval 1048-1105; that stretch reads IDPSPFQLVERTSILKVHSLFSMVGINHAYVTKIGRLVGVVGLKELRKAIEDINSNSF. Residues 1165 to 1193 are compositionally biased toward polar residues; sequence GTVSLTMPPQESKQSPSADKSNTENGNHA.

Belongs to the chloride channel (TC 2.A.49) family. At embryonic stages 13-16, expressed in a subset of the midline cells of the midline primordium and in all of the midline glia. Expressed along the Z-line of the sarcomere in larval longitudinal muscles.

The protein resides in the membrane. Functionally, voltage-gated chloride channel. Chloride channels have several functions including the regulation of cell volume; membrane potential stabilization, signal transduction and transepithelial transport. The sequence is that of Chloride channel protein 2 (ClC-a) from Drosophila melanogaster (Fruit fly).